The chain runs to 270 residues: Replication protein A 32 kDa subunit (270 aa).

Met-1 carries the N-acetylmethionine modification. Phosphoserine; by PRKDC is present on residues Ser-4 and Ser-8. Thr-21 bears the Phosphothreonine; by PRKDC mark. The disordered stretch occupies residues 21-41 (TQSPGGFGSPAPSQAEKKSRA). Position 23 is a phosphoserine; by CDK2 (Ser-23). Ser-29 carries the phosphoserine; by CDK1 modification. Phosphoserine; by PRKDC is present on Ser-33. Glycyl lysine isopeptide (Lys-Gly) (interchain with G-Cter in ubiquitin) cross-links involve residues Lys-37 and Lys-38. Positions 74–148 (VTIVGIIRHA…KSLVAFKIMP (75 aa)) form a DNA-binding region, OB. The tract at residues 187-270 (GMSEAGNFGG…DDHFKSTDAE (84 aa)) is interaction with RAD52, TIPIN, UNG and XPA.

It belongs to the replication factor A protein 2 family. Component of the replication protein A complex (RPA/RP-A), a heterotrimeric complex composed of RPA1, RPA2 and RPA3. Interacts with PRPF19; the PRP19-CDC5L complex is recruited to the sites of DNA repair where it ubiquitinates the replication protein A complex (RPA). Interacts with SERTAD3. Interacts with TIPIN. Interacts with TIMELESS. Interacts with PPP4R2; the interaction is direct, DNA damage-dependent and mediates the recruitment of the PP4 catalytic subunit PPP4C. Interacts (hyperphosphorylated) with RAD51. Interacts with SMARCAL1; the interaction is direct and mediates the recruitment to the RPA complex of SMARCAL1. Interacts with RAD52 and XPA; those interactions are direct and associate RAD52 and XPA to the RPA complex. Interacts with FBH1. Interacts with ETAA1; the interaction is direct and promotes ETAA1 recruitment at stalled replication forks. Interacts with RFWD3. Interacts with DDI2. Interacts (in unphosphorylated form via N-terminus) with EIF4EBP3; the interaction enhances EIF4EBP3-mediated inhibition of EIF4E-mediated mRNA nuclear export. Interacts with BRIP1/FANCJ via the RPA1 subunit; following DNA damage they colocalize in foci in the nucleus. Interacts with nuclear UNG (isoform 2); this interaction mediates UNG recruitment to RPA-coated single-stranded DNA at stalled replication forks. Post-translationally, differentially phosphorylated throughout the cell cycle, becoming phosphorylated at the G1-S transition and dephosphorylated in late mitosis. Mainly phosphorylated at Ser-23 and Ser-29, by cyclin A-CDK2 and cyclin B-CDK1, respectively during DNA replication and mitosis. Dephosphorylation may require the serine/threonine-protein phosphatase 4. Phosphorylation at Ser-23 and Ser-29 is a prerequisite for further phosphorylation. Becomes hyperphosphorylated on additional residues including Ser-4, Ser-8, Thr-21 and Ser-33 in response to DNA damage. Hyperphosphorylation is mediated by ATM, ATR and PRKDC. Primarily recruited to DNA repair nuclear foci as a hypophosphorylated form it undergoes subsequent hyperphosphorylation, catalyzed by ATR. Hyperphosphorylation is required for RAD51 recruitment to chromatin and efficient DNA repair. Phosphorylation at Thr-21 depends upon RFWD3 presence. In terms of processing, DNA damage-induced 'Lys-63'-linked polyubiquitination by PRPF19 mediates ATRIP recruitment to the RPA complex at sites of DNA damage and activation of ATR. Ubiquitinated by RFWD3 at stalled replication forks in response to DNA damage: ubiquitination by RFWD3 does not lead to degradation by the proteasome and promotes removal of the RPA complex from stalled replication forks, promoting homologous recombination.

It is found in the nucleus. The protein resides in the PML body. Functionally, as part of the heterotrimeric replication protein A complex (RPA/RP-A), binds and stabilizes single-stranded DNA intermediates that form during DNA replication or upon DNA stress. It prevents their reannealing and in parallel, recruits and activates different proteins and complexes involved in DNA metabolism. Thereby, it plays an essential role both in DNA replication and the cellular response to DNA damage. In the cellular response to DNA damage, the RPA complex controls DNA repair and DNA damage checkpoint activation. Through recruitment of ATRIP activates the ATR kinase a master regulator of the DNA damage response. It is required for the recruitment of the DNA double-strand break repair factors RAD51 and RAD52 to chromatin in response to DNA damage. Also recruits to sites of DNA damage proteins like XPA and XPG that are involved in nucleotide excision repair and is required for this mechanism of DNA repair. Also plays a role in base excision repair (BER) probably through interaction with UNG. Also recruits SMARCAL1/HARP, which is involved in replication fork restart, to sites of DNA damage. May also play a role in telomere maintenance. RPA stimulates 5'-3' helicase activity of BRIP1/FANCJ. This is Replication protein A 32 kDa subunit (RPA2) from Homo sapiens (Human).